Reading from the N-terminus, the 144-residue chain is UPF0179 protein PF1381 (144 aa).

Belongs to the UPF0179 family.

This Pyrococcus furiosus (strain ATCC 43587 / DSM 3638 / JCM 8422 / Vc1) protein is UPF0179 protein PF1381.